Here is a 489-residue protein sequence, read N- to C-terminus: Inositol-pentakisphosphate 2-kinase (489 aa).

An EXKPK motif motif is present at residues 136 to 140 (EIKPK).

The protein belongs to the IPK1 type 2 family.

Its subcellular location is the cytoplasm. The protein resides in the nucleus. It catalyses the reaction 1D-myo-inositol 1,3,4,5,6-pentakisphosphate + ATP = 1D-myo-inositol hexakisphosphate + ADP + H(+). In terms of biological role, phosphorylates Ins(1,3,4,5,6)P5 at position 2 to form Ins(1,2,3,4,5,6)P6 (InsP6 or phytate). InsP6 is involved in many processes such as mRNA export, non-homologous end-joining, endocytosis, ion channel regulation. It also protects cells from TNF-alpha-induced apoptosis. The polypeptide is Inositol-pentakisphosphate 2-kinase (Ippk) (Rattus norvegicus (Rat)).